The primary structure comprises 559 residues: D-2-hydroxyglutarate dehydrogenase, mitochondrial (559 aa).

A mitochondrion-targeting transit peptide spans 1–78 (MMMQKLRRSG…GMLLQQYKCF (78 aa)). The FAD-binding PCMH-type domain maps to 130–309 (YKGSSKLMLL…TKVSILTQPK (180 aa)).

This sequence belongs to the FAD-binding oxidoreductase/transferase type 4 family. In terms of assembly, homodimer. FAD serves as cofactor.

The protein localises to the mitochondrion. It catalyses the reaction (R)-2-hydroxyglutarate + A = 2-oxoglutarate + AH2. Its function is as follows. Catalyzes the oxidation of (R)-2-hydroxyglutarate to 2-oxoglutarate. May be involved in the catabolism of propionyl-CoA derived from beta-oxidation. Involved in degradation of lysine for the supply of carbon and electrons to the ETF/ETFQO complex during dark-induced sugar starvation. The polypeptide is D-2-hydroxyglutarate dehydrogenase, mitochondrial (D2HGDH) (Arabidopsis thaliana (Mouse-ear cress)).